Consider the following 410-residue polypeptide: Tryptophan synthase beta chain (410 aa).

Position 99 is an N6-(pyridoxal phosphate)lysine (Lys-99).

The protein belongs to the TrpB family. As to quaternary structure, tetramer of two alpha and two beta chains. Pyridoxal 5'-phosphate is required as a cofactor.

It catalyses the reaction (1S,2R)-1-C-(indol-3-yl)glycerol 3-phosphate + L-serine = D-glyceraldehyde 3-phosphate + L-tryptophan + H2O. It participates in amino-acid biosynthesis; L-tryptophan biosynthesis; L-tryptophan from chorismate: step 5/5. Its function is as follows. The beta subunit is responsible for the synthesis of L-tryptophan from indole and L-serine. The chain is Tryptophan synthase beta chain from Pseudomonas fluorescens (strain Pf0-1).